Consider the following 244-residue polypeptide: Krueppel-like factor 9 (244 aa).

Disordered regions lie at residues 24-51 (VPEHGGAPDAERLRLPEREVTKEHGDPG) and 80-142 (SVCS…SEKR). The segment covering 32-51 (DAERLRLPEREVTKEHGDPG) has biased composition (basic and acidic residues). Ser122 is modified (phosphoserine). 3 C2H2-type zinc fingers span residues 143–167 (HKCPYSGCGKVYGKSSHLKAHYRVH), 173–197 (FPCTWPDCLKKFSRSDELTRHYRTH), and 203–225 (FRCPLCEKRFMRSDHLTKHARRH).

The protein belongs to the Sp1 C2H2-type zinc-finger protein family. Interacts with ZZEF1.

The protein resides in the nucleus. Its function is as follows. Transcription factor that binds to GC box promoter elements. Selectively activates mRNA synthesis from genes containing tandem repeats of GC boxes but represses genes with a single GC box. Acts as an epidermal circadian transcription factor regulating keratinocyte proliferation. In Sus scrofa (Pig), this protein is Krueppel-like factor 9 (KLF9).